The primary structure comprises 106 residues: Toxin-like structure LSTX-D8 (106 aa).

A signal peptide spans 1-20 (MTKVLVVVALLVTLISYSSS). The propeptide occupies 21 to 41 (EGIDDLEADELLSLMANEQTR). Disulfide bonds link C45–C60, C52–C69, C59–C85, and C71–C83.

Belongs to the neurotoxin 19 (CSTX) family. 02 (D7) subfamily. As to expression, expressed by the venom gland.

The protein localises to the secreted. This is Toxin-like structure LSTX-D8 from Lycosa singoriensis (Wolf spider).